We begin with the raw amino-acid sequence, 571 residues long: Mannan endo-1,4-beta-mannosidase B (571 aa).

The signal sequence occupies residues Met-1–Ala-19. Residues Val-22–Asn-141 enclose the CBM6 domain. Residues Pro-165–Asp-459 form the GH26 domain. Trp-286 contributes to the substrate binding site. Glu-319 (proton donor) is an active-site residue. 2 residues coordinate substrate: Trp-324 and Tyr-379. Residue Glu-407 is the Nucleophile of the active site. CBM10 domains follow at residues Glu-491–Gly-527 and Val-534–Ile-571.

This sequence belongs to the glycosyl hydrolase 26 family.

It carries out the reaction Random hydrolysis of (1-&gt;4)-beta-D-mannosidic linkages in mannans, galactomannans and glucomannans.. This Piromyces sp protein is Mannan endo-1,4-beta-mannosidase B (MANB).